Reading from the N-terminus, the 236-residue chain is MRFDAVTLFAEMFDAVLDYGITRRALDRGLYRFKSWNPRAFTDDPHRTVDDRPYGGGPGMLMLAEPLDRALNAVQQELASENLAPWVVHFSPRGRPLTQQRVMELKDMPALVLLCGRYEGIDERLLQRRVDEEVSLGDFVLSGGELPALALMDAIVRQLPGALNDAESAAQDSFSAGLLDCPHYTRPEVWQGMAVPQVLKSGNHAAIAKWRHEQSLRLTGALRPDLLERAQHDERN.

S-adenosyl-L-methionine contacts are provided by residues Gly-116 and 136 to 141 (LGDFVL).

It belongs to the RNA methyltransferase TrmD family. Homodimer.

It is found in the cytoplasm. It catalyses the reaction guanosine(37) in tRNA + S-adenosyl-L-methionine = N(1)-methylguanosine(37) in tRNA + S-adenosyl-L-homocysteine + H(+). Functionally, specifically methylates guanosine-37 in various tRNAs. This Thiobacillus denitrificans (strain ATCC 25259 / T1) protein is tRNA (guanine-N(1)-)-methyltransferase.